We begin with the raw amino-acid sequence, 363 residues long: tRNA(Met) cytidine acetate ligase (363 aa).

Residues 7-20 (IAEF…HKYL), Gly-96, Asn-152, and Arg-175 contribute to the ATP site.

It belongs to the TmcAL family.

The protein resides in the cytoplasm. The catalysed reaction is cytidine(34) in elongator tRNA(Met) + acetate + ATP = N(4)-acetylcytidine(34) in elongator tRNA(Met) + AMP + diphosphate. In terms of biological role, catalyzes the formation of N(4)-acetylcytidine (ac(4)C) at the wobble position of elongator tRNA(Met), using acetate and ATP as substrates. First activates an acetate ion to form acetyladenylate (Ac-AMP) and then transfers the acetyl group to tRNA to form ac(4)C34. The sequence is that of tRNA(Met) cytidine acetate ligase from Streptococcus thermophilus (strain CNRZ 1066).